A 169-amino-acid polypeptide reads, in one-letter code: MICOS complex subunit MIC19 (169 aa).

G2 is lipidated: N-myristoyl glycine. Residues 123–165 enclose the CHCH domain; sequence ENVCQDNENEIVRCLQENPGRVLKCAPLTEAFEKCVGEFRQQV. 2 consecutive short sequence motifs (cx9C motif) follow at residues 126–136 and 147–157; these read CQDNENEIVRC and CAPLTEAFEKC. Disulfide bonds link C126/C157 and C136/C147.

It belongs to the MICOS complex subunit Mic19 family. Metazoan Mic19 subfamily. Component of the mitochondrial contact site and cristae organizing system (MICOS) complex.

Its subcellular location is the mitochondrion inner membrane. Functionally, plays a role in maintaining mitochondrial morphology. May act as a component of the MICOS complex, a large protein complex of the mitochondria. This chain is MICOS complex subunit MIC19, found in Caenorhabditis elegans.